The sequence spans 291 residues: Protease HtpX homolog (291 aa).

2 helical membrane passes run 11-31 and 34-54; these read INTF…GLLA and FLGM…ACVQ. His140 is a binding site for Zn(2+). Residue Glu141 is part of the active site. His144 serves as a coordination point for Zn(2+). The next 2 helical transmembrane spans lie at 155-175 and 186-206; these read IVFG…RALI and AFSF…AMLV. Glu215 contacts Zn(2+).

This sequence belongs to the peptidase M48B family. Zn(2+) is required as a cofactor.

The protein resides in the cell membrane. The chain is Protease HtpX homolog from Tropheryma whipplei (strain Twist) (Whipple's bacillus).